A 375-amino-acid chain; its full sequence is Cobalt-precorrin-5B C(1)-methyltransferase (375 aa).

The protein belongs to the CbiD family.

It catalyses the reaction Co-precorrin-5B + S-adenosyl-L-methionine = Co-precorrin-6A + S-adenosyl-L-homocysteine. It functions in the pathway cofactor biosynthesis; adenosylcobalamin biosynthesis; cob(II)yrinate a,c-diamide from sirohydrochlorin (anaerobic route): step 6/10. Functionally, catalyzes the methylation of C-1 in cobalt-precorrin-5B to form cobalt-precorrin-6A. The sequence is that of Cobalt-precorrin-5B C(1)-methyltransferase from Fusobacterium nucleatum subsp. nucleatum (strain ATCC 25586 / DSM 15643 / BCRC 10681 / CIP 101130 / JCM 8532 / KCTC 2640 / LMG 13131 / VPI 4355).